A 159-amino-acid polypeptide reads, in one-letter code: Deoxyuridine 5'-triphosphate nucleotidohydrolase (159 aa).

Substrate contacts are provided by residues 78-80 (RSG), N91, 95-97 (LID), and M105.

The protein belongs to the dUTPase family. Mg(2+) is required as a cofactor.

It carries out the reaction dUTP + H2O = dUMP + diphosphate + H(+). Its pathway is pyrimidine metabolism; dUMP biosynthesis; dUMP from dCTP (dUTP route): step 2/2. Its function is as follows. This enzyme is involved in nucleotide metabolism: it produces dUMP, the immediate precursor of thymidine nucleotides and it decreases the intracellular concentration of dUTP so that uracil cannot be incorporated into DNA. The protein is Deoxyuridine 5'-triphosphate nucleotidohydrolase of Buchnera aphidicola subsp. Schizaphis graminum (strain Sg).